A 318-amino-acid polypeptide reads, in one-letter code: tRNA U34 carboxymethyltransferase (318 aa).

Carboxy-S-adenosyl-L-methionine is bound by residues Lys88, Trp102, Lys107, Gly126, 176–177 (LE), Met192, Tyr196, and Arg311.

It belongs to the class I-like SAM-binding methyltransferase superfamily. CmoB family. Homotetramer.

The catalysed reaction is carboxy-S-adenosyl-L-methionine + 5-hydroxyuridine(34) in tRNA = 5-carboxymethoxyuridine(34) in tRNA + S-adenosyl-L-homocysteine + H(+). In terms of biological role, catalyzes carboxymethyl transfer from carboxy-S-adenosyl-L-methionine (Cx-SAM) to 5-hydroxyuridine (ho5U) to form 5-carboxymethoxyuridine (cmo5U) at position 34 in tRNAs. The polypeptide is tRNA U34 carboxymethyltransferase (Pseudomonas putida (strain GB-1)).